The chain runs to 425 residues: Pre-mRNA-splicing factor RBM22 (425 aa).

The C3H1-type zinc finger occupies 159–186 (RNRPHICSFWVKGECKRGEECPYRHEKP). In terms of domain architecture, RRM spans 232–305 (TTLYIGGLGE…RRLNVKWGRS (74 aa)). Disordered stretches follow at residues 304–331 (RSQA…PGLP) and 384–425 (HTMD…HGGP). A compositionally biased stretch (pro residues) spans 389-399 (MAPPVPPPMAL).

The protein belongs to the SLT11 family. In terms of assembly, component of the pre-catalytic and catalytic spliceosome complexes. Component of the postcatalytic spliceosome P complex.

It localises to the nucleus. It is found in the cytoplasm. In terms of biological role, required for pre-mRNA splicing as component of the activated spliceosome. Involved in the first step of pre-mRNA splicing. Binds directly to the internal stem-loop (ISL) domain of the U6 snRNA and to the pre-mRNA intron near the 5' splice site during the activation and catalytic phases of the spliceosome cycle. Required for normal early embryogenesis. The chain is Pre-mRNA-splicing factor RBM22 (rbm22) from Danio rerio (Zebrafish).